Here is a 900-residue protein sequence, read N- to C-terminus: Chaperone protein ClpB 2 (900 aa).

A Clp R domain is found at 15–154 (PDRFSDPAWE…ESLLRQPSVS (140 aa)). 2 repeat regions span residues 18–81 (FSDP…LADQ) and 91–154 (IGED…PSVS). The interval 151-183 (PSVSPAPAPPPVPTAASAPAPTPRSAPAPRVMA) is disordered. Residues 154–163 (SPAPAPPPVP) are compositionally biased toward pro residues. The tract at residues 191-376 (ELEREPSALE…RRFQQVLIRE (186 aa)) is NBD1. Residue 244 to 251 (GEPGVGKT) participates in ATP binding. The linker stretch occupies residues 377–581 (PDLELSLEIL…IADLVARWTG (205 aa)). A coiled-coil region spans residues 427–557 (IDLIDEAAAQ…LEASQAEAQS (131 aa)). Residues 591–803 (ERRKLLALES…RIDEVIRFRP (213 aa)) are NBD2. 641-648 (GPTGVGKT) lines the ATP pocket. A C-terminal region spans residues 804–900 (LKVKDLVRIV…GASLEFEPLE (97 aa)).

It belongs to the ClpA/ClpB family. As to quaternary structure, homohexamer. The oligomerization is ATP-dependent.

Its subcellular location is the cytoplasm. In terms of biological role, part of a stress-induced multi-chaperone system, it is involved in the recovery of the cell from heat-induced damage, in cooperation with DnaK, DnaJ and GrpE. Acts before DnaK, in the processing of protein aggregates. Protein binding stimulates the ATPase activity; ATP hydrolysis unfolds the denatured protein aggregates, which probably helps expose new hydrophobic binding sites on the surface of ClpB-bound aggregates, contributing to the solubilization and refolding of denatured protein aggregates by DnaK. This chain is Chaperone protein ClpB 2 (clpB2), found in Parasynechococcus marenigrum (strain WH8102).